Here is a 338-residue protein sequence, read N- to C-terminus: Aspartate-semialdehyde dehydrogenase (338 aa).

NADP(+) contacts are provided by residues 13 to 16 and 41 to 42; these read TGAV and RS. Arg101 lines the phosphate pocket. Cys130 functions as the Acyl-thioester intermediate in the catalytic mechanism. Residue Gln157 coordinates substrate. 160-161 provides a ligand contact to NADP(+); sequence SG. Lys214 lines the phosphate pocket. Arg236 is a substrate binding site. His243 acts as the Proton acceptor in catalysis. Gln316 contacts NADP(+).

The protein belongs to the aspartate-semialdehyde dehydrogenase family. As to quaternary structure, homodimer.

It catalyses the reaction L-aspartate 4-semialdehyde + phosphate + NADP(+) = 4-phospho-L-aspartate + NADPH + H(+). It functions in the pathway amino-acid biosynthesis; L-lysine biosynthesis via DAP pathway; (S)-tetrahydrodipicolinate from L-aspartate: step 2/4. Its pathway is amino-acid biosynthesis; L-methionine biosynthesis via de novo pathway; L-homoserine from L-aspartate: step 2/3. The protein operates within amino-acid biosynthesis; L-threonine biosynthesis; L-threonine from L-aspartate: step 2/5. Functionally, catalyzes the NADPH-dependent formation of L-aspartate-semialdehyde (L-ASA) by the reductive dephosphorylation of L-aspartyl-4-phosphate. The polypeptide is Aspartate-semialdehyde dehydrogenase (asd) (Synechocystis sp. (strain ATCC 27184 / PCC 6803 / Kazusa)).